The chain runs to 338 residues: Glycerol-3-phosphate dehydrogenase [NAD(P)+] (338 aa).

Positions 13, 14, and 108 each coordinate NADPH. Sn-glycerol 3-phosphate-binding residues include Lys-108, Gly-139, and Ser-141. An NADPH-binding site is contributed by Ala-143. Residues Lys-194, Asp-247, Ser-257, Arg-258, and Asn-259 each contribute to the sn-glycerol 3-phosphate site. Residue Lys-194 is the Proton acceptor of the active site. Arg-258 is an NADPH binding site. Residues Val-282 and Glu-284 each coordinate NADPH.

The protein belongs to the NAD-dependent glycerol-3-phosphate dehydrogenase family.

The protein localises to the cytoplasm. The catalysed reaction is sn-glycerol 3-phosphate + NAD(+) = dihydroxyacetone phosphate + NADH + H(+). It carries out the reaction sn-glycerol 3-phosphate + NADP(+) = dihydroxyacetone phosphate + NADPH + H(+). It functions in the pathway membrane lipid metabolism; glycerophospholipid metabolism. Its function is as follows. Catalyzes the reduction of the glycolytic intermediate dihydroxyacetone phosphate (DHAP) to sn-glycerol 3-phosphate (G3P), the key precursor for phospholipid synthesis. This Listeria innocua serovar 6a (strain ATCC BAA-680 / CLIP 11262) protein is Glycerol-3-phosphate dehydrogenase [NAD(P)+].